The chain runs to 402 residues: Multidrug resistance protein MdtH (402 aa).

At 1–12 the chain is on the cytoplasmic side; it reads MSRVSQARNLGK. The helical transmembrane segment at 13 to 33 threads the bilayer; it reads YFLLIDNMLVVLGFFVVFPLI. Residues 34 to 98 are Periplasmic-facing; the sequence is SIRFVDQMGW…GFATMGIAHE (65 aa). A helical membrane pass occupies residues 99–116; the sequence is PWLLWFSCLLSGLGGTLF. The Cytoplasmic portion of the chain corresponds to 117–138; that stretch reads DPPRSALVVKLIRPQQRGRFFS. A helical transmembrane segment spans residues 139–159; that stretch reads LLMMQDSAGAVIGALLGSWLL. Topologically, residues 160–164 are periplasmic; the sequence is QYDFR. A helical membrane pass occupies residues 165–185; that stretch reads LVCATGAVLFVLCAAFNAWLL. At 186–213 the chain is on the cytoplasmic side; it reads PAWKLSTVRTPVREGMTRVMRDKRFVTY. The helical transmembrane segment at 214–234 threads the bilayer; the sequence is VLTLAGYYMLAVQVMLMLPIM. Residues 235–243 are Periplasmic-facing; the sequence is VNDVAGAPS. Residues 244-264 form a helical membrane-spanning segment; sequence AVKWMYAIEACLSLTLLYPIA. The Cytoplasmic portion of the chain corresponds to 265-276; sequence RWSEKHFRLEHR. A helical membrane pass occupies residues 277–297; that stretch reads LMAGLLIMSLSMMPVGMVSGL. The Periplasmic segment spans residues 298-299; the sequence is QQ. Residues 300-320 form a helical membrane-spanning segment; that stretch reads LFTLICLFYIGSIIAEPARET. Residues 321-339 are Cytoplasmic-facing; the sequence is LSASLADARARGSYMGFSR. Residues 340–360 form a helical membrane-spanning segment; it reads LGLAIGGAIGYIGGGWLFDLG. The Periplasmic segment spans residues 361-367; the sequence is KSAHQPE. Residues 368 to 388 form a helical membrane-spanning segment; sequence LPWMMLGIIGIFTFLALGWQF. The Cytoplasmic portion of the chain corresponds to 389 to 402; that stretch reads SQKRAARRLLERDA.

Belongs to the major facilitator superfamily. DHA1 family. MdtH (TC 2.A.1.2.21) subfamily.

The protein localises to the cell inner membrane. In terms of biological role, confers resistance to norfloxacin and enoxacin. In Escherichia coli O139:H28 (strain E24377A / ETEC), this protein is Multidrug resistance protein MdtH.